Consider the following 284-residue polypeptide: Probable O-methyltransferase ustE (284 aa).

N-linked (GlcNAc...) asparagine glycosylation is found at Asn22 and Asn29. Helical transmembrane passes span 88–108 (LLLLFMDILAAAKHFWFVLTV) and 157–177 (YLATGFIIFAVGLVTECVCEI). N-linked (GlcNAc...) asparagine glycosylation is present at Asn205. The helical transmembrane segment at 215–235 (GLALASGGMIYGMSIAMFFMW) threads the bilayer. Asn264 carries N-linked (GlcNAc...) asparagine glycosylation.

It belongs to the class VI-like SAM-binding methyltransferase superfamily. Isoprenylcysteine carboxyl methyltransferase family.

Its subcellular location is the membrane. It participates in secondary metabolite biosynthesis. In terms of biological role, probable O-methyltransferase; part of the gene cluster that mediates the biosynthesis of ustilaginoidins, dimeric gamma-naphthopyrones isolated from different fungal species. The first step in the biosynthesis of ustilaginoidins is the production of gamma-naphthopyrone precursor YWA1 by the non-reducing polyketide synthase ustP, via condensation of one acetyl-CoA starter unit with 6 malonyl-CoA units. YWA1 is then probably substrate of the ustZ to yield norrubrofusarin via a dehydration reaction. A key enzyme in the biosynthetic pathway is the laccase ustL, which catalyzes the oxidative dimerization of norrubrofusarin to ustilaginoidin A. It can produce the M- and P-atropisomers in varying amounts, depending on the reaction conditions. For the biosynthesis of 3-methylustilaginoid in derivatives such as chaetochromin A, a methylated derivative of YWA1 is required. The C-methylation is considered to be catalyzed by ustM, the phosphopantetheine attachment site of which indicates that it acts on the growing polyketide chain before release of the product. For the biosynthesis of chaetochromin A, it is assumed that saturation of the D2 double bond takes place before dimerization, and is probably catalyzed by an external reductase because no candidate gene was identified within the cluster. This chain is Probable O-methyltransferase ustE, found in Ustilaginoidea virens (Rice false smut fungus).